A 306-amino-acid chain; its full sequence is Pyridoxal 5'-phosphate synthase subunit PdxS (306 aa).

Asp36 contacts D-ribose 5-phosphate. Lys93 serves as the catalytic Schiff-base intermediate with D-ribose 5-phosphate. Gly165 contacts D-ribose 5-phosphate. Arg177 serves as a coordination point for D-glyceraldehyde 3-phosphate. D-ribose 5-phosphate contacts are provided by residues Gly226 and 247 to 248; that span reads GS.

The protein belongs to the PdxS/SNZ family. As to quaternary structure, in the presence of PdxT, forms a dodecamer of heterodimers.

The enzyme catalyses aldehydo-D-ribose 5-phosphate + D-glyceraldehyde 3-phosphate + L-glutamine = pyridoxal 5'-phosphate + L-glutamate + phosphate + 3 H2O + H(+). Its pathway is cofactor biosynthesis; pyridoxal 5'-phosphate biosynthesis. Functionally, catalyzes the formation of pyridoxal 5'-phosphate from ribose 5-phosphate (RBP), glyceraldehyde 3-phosphate (G3P) and ammonia. The ammonia is provided by the PdxT subunit. Can also use ribulose 5-phosphate and dihydroxyacetone phosphate as substrates, resulting from enzyme-catalyzed isomerization of RBP and G3P, respectively. The chain is Pyridoxal 5'-phosphate synthase subunit PdxS from Nocardia farcinica (strain IFM 10152).